A 235-amino-acid polypeptide reads, in one-letter code: Class B acid phosphatase (235 aa).

The signal sequence occupies residues 1–22; the sequence is MKNLLKLSAIAILAASAVSTFA. Asp-67 functions as the Nucleophile in the catalytic mechanism. The Mg(2+) site is built by Asp-67 and Asp-69. Asp-69 (proton donor) is an active-site residue. Substrate contacts are provided by residues 135–136 and Lys-175; that span reads TG. Asp-190 is a binding site for Mg(2+).

This sequence belongs to the class B bacterial acid phosphatase family. In terms of assembly, homotetramer. It depends on Mg(2+) as a cofactor.

It is found in the periplasm. The catalysed reaction is a phosphate monoester + H2O = an alcohol + phosphate. Functionally, dephosphorylates several organic phosphate monoesters. Also has a phosphotransferase activity catalyzing the transfer of low-energy phosphate groups from organic phosphate monoesters to free hydroxyl groups of various organic compounds. This is Class B acid phosphatase from Haemophilus parainfluenzae (strain T3T1).